The chain runs to 452 residues: Pup--protein ligase (452 aa).

Glutamate 9 contributes to the Mg(2+) binding site. ATP is bound at residue arginine 53. Tyrosine 55 is a Mg(2+) binding site. The Proton acceptor role is filled by aspartate 57. Glutamate 63 is a binding site for Mg(2+). 2 residues coordinate ATP: threonine 66 and tryptophan 419.

This sequence belongs to the Pup ligase/Pup deamidase family. Pup-conjugating enzyme subfamily.

It carries out the reaction ATP + [prokaryotic ubiquitin-like protein]-L-glutamate + [protein]-L-lysine = ADP + phosphate + N(6)-([prokaryotic ubiquitin-like protein]-gamma-L-glutamyl)-[protein]-L-lysine.. It participates in protein degradation; proteasomal Pup-dependent pathway. It functions in the pathway protein modification; protein pupylation. Functionally, catalyzes the covalent attachment of the prokaryotic ubiquitin-like protein modifier Pup to the proteasomal substrate proteins, thereby targeting them for proteasomal degradation. This tagging system is termed pupylation. The ligation reaction involves the side-chain carboxylate of the C-terminal glutamate of Pup and the side-chain amino group of a substrate lysine. In Rhodococcus jostii (strain RHA1), this protein is Pup--protein ligase.